Consider the following 200-residue polypeptide: Peptidyl-tRNA hydrolase (200 aa).

Residue Tyr16 participates in tRNA binding. His21 acts as the Proton acceptor in catalysis. TRNA-binding residues include Phe67, Asn69, and Asn115.

The protein belongs to the PTH family. Monomer.

It localises to the cytoplasm. The catalysed reaction is an N-acyl-L-alpha-aminoacyl-tRNA + H2O = an N-acyl-L-amino acid + a tRNA + H(+). Functionally, hydrolyzes ribosome-free peptidyl-tRNAs (with 1 or more amino acids incorporated), which drop off the ribosome during protein synthesis, or as a result of ribosome stalling. Catalyzes the release of premature peptidyl moieties from peptidyl-tRNA molecules trapped in stalled 50S ribosomal subunits, and thus maintains levels of free tRNAs and 50S ribosomes. In Prochlorococcus marinus (strain MIT 9312), this protein is Peptidyl-tRNA hydrolase.